A 305-amino-acid chain; its full sequence is Divergent heme oxygenase-like protein (305 aa).

Residues 1–18 form the signal peptide; sequence MIRKIIILMFTFFSNIHN. The segment at 1–83 is sufficient for apicoplast targeting; that stretch reads MIRKIIILMF…GVDKNNINYN (83 aa). N-linked (GlcNAc...) asparagine glycans are attached at residues asparagine 132, asparagine 159, and asparagine 288.

Proteolytically cleaved; targeted by its N-terminal leader sequence for import into the apicoplast where it undergoes proteolytic processing, resulting in an N-terminus starting at or near Gly-33 in the mature protein.

The protein localises to the plastid. Its subcellular location is the apicoplast. Essential for blood-stage parasite viability. Required for apicoplast biogenesis. Associates with the apicoplast genome and mediates apicoplast gene expression. Can bind heme. Can bind protoporphyrin IX. The sequence is that of Divergent heme oxygenase-like protein from Plasmodium falciparum (isolate 3D7).